The sequence spans 957 residues: PE-PGRS family protein PE_PGRS3 (957 aa).

The region spanning 4–94 (VIAAPEVIAA…GAYAAAEAAA (91 aa)) is the PE domain. Positions 893 to 925 (CRRQRRADRQRRQRRQRRQSRGHARCRRHRRAA) are enriched in basic residues. A disordered region spans residues 893-957 (CRRQRRADRQ…GISCSPQMMP (65 aa)).

Belongs to the mycobacterial PE family. PGRS subfamily. In terms of processing, a cleavage of the protein removes the N-terminal 120-150 residues, immediately upstream the PGRS domain. The exact position of the cleavage site could not be identified.

Its subcellular location is the cell outer membrane. The protein localises to the secreted. It localises to the cell wall. The protein resides in the cell surface. In terms of biological role, the arginine-rich C-terminal region protrudes from the mycobacterial membrane and mediates M.tuberculosis entry into host epithelial cells. May serve as a bridge between mycobacteria and host cells by interacting with specific host phospholipids and extracting them from host cells, for their direct integration or as a source of phosphate, during phases of TB pathogenesis when M.tuberculosis is short of phosphate supply. The protein is PE-PGRS family protein PE_PGRS3 of Mycobacterium tuberculosis (strain ATCC 25618 / H37Rv).